Consider the following 276-residue polypeptide: Large ribosomal subunit protein uL2 (276 aa).

Disordered stretches follow at residues 37 to 59 (QFQK…GGHK) and 225 to 276 (VMNP…RHKR). A compositionally biased stretch (polar residues) spans 39–49 (QKSGRNNNGHI). Residues 50-59 (TTRHKGGGHK) show a composition bias toward basic residues.

This sequence belongs to the universal ribosomal protein uL2 family. Part of the 50S ribosomal subunit. Forms a bridge to the 30S subunit in the 70S ribosome.

One of the primary rRNA binding proteins. Required for association of the 30S and 50S subunits to form the 70S ribosome, for tRNA binding and peptide bond formation. It has been suggested to have peptidyltransferase activity; this is somewhat controversial. Makes several contacts with the 16S rRNA in the 70S ribosome. In Cupriavidus pinatubonensis (strain JMP 134 / LMG 1197) (Cupriavidus necator (strain JMP 134)), this protein is Large ribosomal subunit protein uL2.